We begin with the raw amino-acid sequence, 110 residues long: Nucleoid-associated protein PsycPRwf_1729 (110 aa).

This sequence belongs to the YbaB/EbfC family. In terms of assembly, homodimer.

Its subcellular location is the cytoplasm. It localises to the nucleoid. Binds to DNA and alters its conformation. May be involved in regulation of gene expression, nucleoid organization and DNA protection. In Psychrobacter sp. (strain PRwf-1), this protein is Nucleoid-associated protein PsycPRwf_1729.